Consider the following 229-residue polypeptide: Vitellogenin (229 aa).

A VWFD domain is found at 1–136 (IVMLKNDNVE…SWILAAESCR (136 aa)). N198 is a glycosylation site (N-linked (GlcNAc...) asparagine).

Expressed in liver, ovary and, to a lesser extent, in muscle, intestine, skin, kidney and heart.

Its function is as follows. Precursor of the egg-yolk proteins that are sources of nutrients during early development of oviparous organisms. Probably binds tetrodotoxin in the ovary. The sequence is that of Vitellogenin from Takifugu pardalis (Panther puffer).